The chain runs to 458 residues: 5-hydroxytryptamine receptor 2C (458 aa).

A signal peptide spans 1–32 (MVNLRKAVHSFLVHLIGLLVWQCDISVSPVAA). The Extracellular portion of the chain corresponds to 33 to 55 (LVTDIFNTSDGGRFKFPDGVQNW). Residues 56–80 (PALSIVIIIILTIGGNILVIMAVSL) traverse the membrane as a helical segment. Residues 81-86 (EKKLHN) are Cytoplasmic-facing. Residues 87 to 111 (ATNYFLMSLAIADMLVGLLVMPLSL) traverse the membrane as a helical segment. Residues 112-128 (LAILYDYVWPLPRYLCP) lie on the Extracellular side of the membrane. Cys127 and Cys207 form a disulfide bridge. A helical transmembrane segment spans residues 129–151 (VWISLDVLFSTASIMHLCAISLD). Thr139 is a binding site for ergotamine. Residues 151 to 153 (DRY) carry the DRY motif; important for ligand-induced conformation changes motif. Over 152–167 (RYVAIRNPVEHSRFNS) the chain is Cytoplasmic. Residues 168–189 (RTKAIMKIAIVWAISIGVSVPI) form a helical membrane-spanning segment. The Extracellular portion of the chain corresponds to 190–213 (PVIGLRDEEKVFVNNTTCVLNDPN). N-linked (GlcNAc...) asparagine glycosylation is found at Asn203 and Asn204. Leu209 is an ergotamine binding site. A helical membrane pass occupies residues 214 to 236 (FVLIGSFVAFFIPLTIMVITYCL). Topologically, residues 237–311 (TIHVLRRQAL…AINNERKASK (75 aa)) are cytoplasmic. The tract at residues 272–301 (TEEENSANPNQDSNPRRRKKKERRPRGTMQ) is disordered. Positions 287–297 (RRRKKKERRPR) are enriched in basic residues. The helical transmembrane segment at 312–336 (VLGIVFFVFLVMWCPFFITNILSVL) threads the bilayer. Cys337 and Cys341 are oxidised to a cystine. Over 337 to 347 (CGKACNQKLME) the chain is Extracellular. Residues 348–370 (KLLNVFVWIGYVCSGINPLVYTL) traverse the membrane as a helical segment. Positions 364–368 (NPLVY) match the NPxxY motif; important for ligand-induced conformation changes and signaling motif. Residues 371–458 (FNKIYRRAFS…SVVSERISSV (88 aa)) lie on the Cytoplasmic side of the membrane. The short motif at 456 to 458 (SSV) is the PDZ-binding element.

The protein belongs to the G-protein coupled receptor 1 family. In terms of assembly, interacts with MPDZ. Interacts with ARRB2. Interacts with MPP3; this interaction stabilizes the receptor at the plasma membrane and prevents the desensitization of the HTR2C receptor-mediated calcium response.

The protein localises to the cell membrane. G-protein coupled receptor for 5-hydroxytryptamine (serotonin). Also functions as a receptor for various drugs and psychoactive substances, including ergot alkaloid derivatives, 1-2,5,-dimethoxy-4-iodophenyl-2-aminopropane (DOI) and lysergic acid diethylamide (LSD). Ligand binding causes a conformation change that triggers signaling via guanine nucleotide-binding proteins (G proteins) and modulates the activity of downstream effectors. HTR2C is coupled to G(q)/G(11) G alpha proteins and activates phospholipase C-beta, releasing diacylglycerol (DAG) and inositol 1,4,5-trisphosphate (IP3) second messengers that modulate the activity of phosphatidylinositol 3-kinase and promote the release of Ca(2+) ions from intracellular stores, respectively. Beta-arrestin family members inhibit signaling via G proteins and mediate activation of alternative signaling pathways. Regulates neuronal activity via the activation of short transient receptor potential calcium channels in the brain, and thereby modulates the activation of pro-opiomelanocortin neurons and the release of CRH that then regulates the release of corticosterone. Plays a role in the regulation of appetite and eating behavior, responses to anxiogenic stimuli and stress. Plays a role in insulin sensitivity and glucose homeostasis. The protein is 5-hydroxytryptamine receptor 2C of Canis lupus familiaris (Dog).